Consider the following 259-residue polypeptide: NAD kinase (259 aa).

The Proton acceptor role is filled by aspartate 49. Residues 49 to 50 (DG), arginine 54, 118 to 119 (NE), aspartate 148, alanine 156, 159 to 164 (TAYNYS), and alanine 183 each bind NAD(+).

The protein belongs to the NAD kinase family. A divalent metal cation serves as cofactor.

It is found in the cytoplasm. The enzyme catalyses NAD(+) + ATP = ADP + NADP(+) + H(+). Its function is as follows. Involved in the regulation of the intracellular balance of NAD and NADP, and is a key enzyme in the biosynthesis of NADP. Catalyzes specifically the phosphorylation on 2'-hydroxyl of the adenosine moiety of NAD to yield NADP. This chain is NAD kinase, found in Xylella fastidiosa (strain 9a5c).